Consider the following 290-residue polypeptide: Putative beta-lactamase HcpC (290 aa).

An N-terminal signal peptide occupies residues 1-25; the sequence is MLENVKKSFFRVLCLGALCLGGLMA. TPR repeat units follow at residues 29-62, 64-98, 100-133, 134-170, 172-205, 206-242, and 244-278; these read PKEL…KENS, CFNL…NYSN, CHLL…LKYA, EGCA…NDGD, CTIL…LKDS, PGCF…ENGG, and CFNL…GAKG. 7 cysteine pairs are disulfide-bonded: Cys-56/Cys-64, Cys-92/Cys-100, Cys-128/Cys-136, Cys-164/Cys-172, Cys-200/Cys-208, Cys-236/Cys-244, and Cys-272/Cys-280.

The protein belongs to the hcp beta-lactamase family.

It is found in the secreted. It catalyses the reaction a beta-lactam + H2O = a substituted beta-amino acid. May hydrolyze 6-aminopenicillinic acid and 7-aminocephalosporanic acid (ACA) derivatives. The polypeptide is Putative beta-lactamase HcpC (hcpC) (Helicobacter pylori (strain ATCC 700392 / 26695) (Campylobacter pylori)).